The primary structure comprises 203 residues: Histidine biosynthesis bifunctional protein HisIE (203 aa).

The phosphoribosyl-AMP cyclohydrolase stretch occupies residues 1–114; sequence MLTEQQRREL…FGDTAHQWLF (114 aa). A phosphoribosyl-ATP pyrophosphohydrolase region spans residues 115-203; sequence LYQLEQLLAE…VIENLRKRHQ (89 aa).

The protein in the N-terminal section; belongs to the PRA-CH family. This sequence in the C-terminal section; belongs to the PRA-PH family.

Its subcellular location is the cytoplasm. It catalyses the reaction 1-(5-phospho-beta-D-ribosyl)-ATP + H2O = 1-(5-phospho-beta-D-ribosyl)-5'-AMP + diphosphate + H(+). The catalysed reaction is 1-(5-phospho-beta-D-ribosyl)-5'-AMP + H2O = 1-(5-phospho-beta-D-ribosyl)-5-[(5-phospho-beta-D-ribosylamino)methylideneamino]imidazole-4-carboxamide. It participates in amino-acid biosynthesis; L-histidine biosynthesis; L-histidine from 5-phospho-alpha-D-ribose 1-diphosphate: step 2/9. The protein operates within amino-acid biosynthesis; L-histidine biosynthesis; L-histidine from 5-phospho-alpha-D-ribose 1-diphosphate: step 3/9. The protein is Histidine biosynthesis bifunctional protein HisIE (hisI) of Escherichia coli (strain K12).